We begin with the raw amino-acid sequence, 322 residues long: AB hydrolase superfamily protein FGSG_00044 (322 aa).

The region spanning 36–319 is the AB hydrolase-1 domain; it reads RTTPKQPVAI…ITAEVRRIVK (284 aa).

It belongs to the AB hydrolase superfamily.

Its pathway is mycotoxin biosynthesis. Its function is as follows. AB hydrolase superfamily protein; part of the gene cluster that mediates the biosynthesis of gramillins A and B, bicyclic lipopeptides that induce cell death in maize leaves but not in wheat leaves. The nonribosomal peptide synthetase GRA1 incorporates respectively a glutamic adic (Glu), a leucine (Leu), a serine (Ser), a hydroxyglutamine (HOGln), a 2-amino decanoic acid, and 2 cysteins (CysB and CysA). The biosynthesis of 2-amino decanoic acid incorporated in gramillins could be initiated by a fatty acid synthase composed of the alpha and beta subunits FGSG_00036 and FGSG_11656. The cytochrome P450 monooxygenase FGSG_15680 could hydroxylate the fatty acid chain. Subsequent oxidation to the ketone by the oxidoreductase FGSG_00048 and transamination by aminotransferase FGSG_00049 could form 2-amino-decanoic acid. On the other hand, FGSG_15680 could also be responsible for the HO-modified glutamine at the gamma-position. Whether hydroxylation occurs on the fully assembled product or on the Gln residue prior to assembly into the gramillins requires further proof. The thioredoxin FGSG_00043 could also be required for the disulfide-bond formation between CysA and CysB. The specific involvement of the remaining proteins from the cluster is more difficult to discern, but could have broader regulatory (FGSG_00040 and FGSG_11657) or enzymatic functions (FGSG_00044 and FGSG_00045). The final C-domain of GRA1 does not possess the expected sequence of a termination CT domain, often implicated in macrocyclization and release of a cyclopeptidein fungal NRPs; and the thioesterase FGSG_00047 may act in concert with the terminal C-domain of GRA1 to catalyze the formation of the macrocyclic anhydride and release of the products. This chain is AB hydrolase superfamily protein FGSG_00044, found in Gibberella zeae (strain ATCC MYA-4620 / CBS 123657 / FGSC 9075 / NRRL 31084 / PH-1) (Wheat head blight fungus).